The primary structure comprises 348 residues: Rhodopsin (348 aa).

Residue M1 is modified to N-acetylmethionine. Residues 1–36 are Extracellular-facing; that stretch reads MNGTEGPNFYVPFSNVTGVVRSPFEQPQYYLAEPWQ. N2 and N15 each carry an N-linked (GlcNAc...) asparagine glycan. Residues 37-61 form a helical membrane-spanning segment; sequence FSMLAAYMFLLIVLGFPINFLTLYV. Residues 62-73 are Cytoplasmic-facing; sequence TVQHKKLRTPLN. The chain crosses the membrane as a helical span at residues 74–96; sequence YILLNLAVADLFMVFGGFTTTLY. Over 97-110 the chain is Extracellular; the sequence is TSLHGYFVFGPTGC. C110 and C187 are disulfide-bonded. Residues 111–133 form a helical membrane-spanning segment; sequence NLEGFFATLGGEIALWSLVVLAI. The 'Ionic lock' involved in activated form stabilization motif lies at 134–136; the sequence is ERY. The Cytoplasmic segment spans residues 134-152; it reads ERYVVVCKPMSNFRFGENH. The helical transmembrane segment at 153-173 threads the bilayer; sequence AIMGVVFTWIMALACAAPPLV. The Extracellular portion of the chain corresponds to 174–202; the sequence is GWSRYIPEGMQCSCGIDYYTLKPEVNNES. A Zn(2+)-binding site is contributed by E201. The helical transmembrane segment at 203-224 threads the bilayer; that stretch reads FVIYMFVVHFTIPMIVIFFCYG. Topologically, residues 225 to 252 are cytoplasmic; sequence QLVFTVKEAAAQQQESATTQKAEKEVTR. Residues 253–274 traverse the membrane as a helical segment; it reads MVIIMVIFFLICWLPYASVAFY. Residues 275–286 lie on the Extracellular side of the membrane; that stretch reads IFTHQGSNFGPI. Residue Q279 coordinates Zn(2+). The helical transmembrane segment at 287–308 threads the bilayer; it reads FMTLPAFFAKSSSIYNPVIYIM. K296 bears the N6-(retinylidene)lysine mark. Over 309 to 348 the chain is Cytoplasmic; sequence LNKQFRNCMLTTLCCGKNPLGDDDASATASKTETSQVAPA. S-palmitoyl cysteine attachment occurs at residues C322 and C323. Residues 330–348 form an interaction with SAG region; that stretch reads DDDASATASKTETSQVAPA. At S334 the chain carries Phosphoserine. At T336 the chain carries Phosphothreonine. Residue S338 is modified to Phosphoserine. Residues T340 and T342 each carry the phosphothreonine modification. S343 bears the Phosphoserine mark.

This sequence belongs to the G-protein coupled receptor 1 family. Opsin subfamily. Homodimer. May form a complex composed of RHO, GRK1 and RCVRN in a Ca(2+)-dependent manner; RCVRN prevents the interaction between GRK1 and RHO. Interacts with GRK1. Interacts (phosphorylated form) with SAG. Interacts with GNAT1. Interacts with GNAT3. SAG and G-proteins compete for a common binding site. Interacts with PRCD; the interaction promotes PRCD stability. Forms a complex with ASAP1 and ARF4. Forms a complex with ASAP1, RAB11A, Rabin8/RAB3IP, ARF4 and RAB11FIP3; the complex regulates Golgi-to-cilia rhodopsin/RHO transport in photoreceptors. In terms of processing, phosphorylated on some or all of the serine and threonine residues present in the C-terminal region. Post-translationally, contains one covalently linked retinal chromophore. Upon light absorption, the covalently bound 11-cis-retinal is converted to all-trans-retinal. After hydrolysis of the Schiff base and release of the covalently bound all-trans-retinal, active rhodopsin is regenerated by binding of a fresh molecule of 11-cis-retinal. In terms of tissue distribution, rod-shaped photoreceptor cells in the retina (at protein level).

It localises to the membrane. Its subcellular location is the cell projection. The protein localises to the cilium. It is found in the photoreceptor outer segment. In terms of biological role, photoreceptor required for image-forming vision at low light intensity. Required for photoreceptor cell viability after birth. Light-induced isomerization of 11-cis to all-trans retinal triggers a conformational change that activates signaling via G-proteins. Subsequent receptor phosphorylation mediates displacement of the bound G-protein alpha subunit by the arrestin SAG and terminates signaling. This Mus musculus (Mouse) protein is Rhodopsin (Rho).